Reading from the N-terminus, the 182-residue chain is Small ribosomal subunit protein uS9 (182 aa).

The protein belongs to the universal ribosomal protein uS9 family.

This chain is Small ribosomal subunit protein uS9, found in Corynebacterium glutamicum (strain R).